The following is an 88-amino-acid chain: Large ribosomal subunit protein bL27 (88 aa).

The protein belongs to the bacterial ribosomal protein bL27 family.

The protein is Large ribosomal subunit protein bL27 of Mycobacterium leprae (strain TN).